Consider the following 145-residue polypeptide: LIM domain only protein 3 (145 aa).

LIM zinc-binding domains lie at 11 to 73 and 75 to 137; these read KGCA…LFGV and GNCA…GLMK.

This Bos taurus (Bovine) protein is LIM domain only protein 3 (LMO3).